The chain runs to 106 residues: Cytochrome c3 (106 aa).

The heme c site is built by His-26, His-29, Cys-34, Cys-37, His-38, His-39, Cys-50, Cys-55, His-56, His-75, Cys-82, Cys-85, His-86, Cys-98, Cys-101, and His-102.

In terms of processing, binds 4 heme c groups per subunit.

Functionally, participates in sulfate respiration coupled with phosphorylation by transferring electrons from the enzyme dehydrogenase to ferredoxin. The polypeptide is Cytochrome c3 (Maridesulfovibrio salexigens (Desulfovibrio salexigens)).